We begin with the raw amino-acid sequence, 336 residues long: Protein DIA1 (336 aa).

It localises to the cytoplasm. Functionally, involved in regulation of invasive growth. This chain is Protein DIA1 (DIA1), found in Saccharomyces cerevisiae (strain ATCC 204508 / S288c) (Baker's yeast).